Consider the following 254-residue polypeptide: Leucyl/phenylalanyl-tRNA--protein transferase (254 aa).

It belongs to the L/F-transferase family.

It is found in the cytoplasm. The catalysed reaction is N-terminal L-lysyl-[protein] + L-leucyl-tRNA(Leu) = N-terminal L-leucyl-L-lysyl-[protein] + tRNA(Leu) + H(+). It catalyses the reaction N-terminal L-arginyl-[protein] + L-leucyl-tRNA(Leu) = N-terminal L-leucyl-L-arginyl-[protein] + tRNA(Leu) + H(+). The enzyme catalyses L-phenylalanyl-tRNA(Phe) + an N-terminal L-alpha-aminoacyl-[protein] = an N-terminal L-phenylalanyl-L-alpha-aminoacyl-[protein] + tRNA(Phe). Functionally, functions in the N-end rule pathway of protein degradation where it conjugates Leu, Phe and, less efficiently, Met from aminoacyl-tRNAs to the N-termini of proteins containing an N-terminal arginine or lysine. The polypeptide is Leucyl/phenylalanyl-tRNA--protein transferase (Bordetella bronchiseptica (strain ATCC BAA-588 / NCTC 13252 / RB50) (Alcaligenes bronchisepticus)).